A 310-amino-acid chain; its full sequence is Ribosomal RNA small subunit methyltransferase H (310 aa).

S-adenosyl-L-methionine-binding positions include 47 to 49 (GGH), D66, F93, D108, and Q115. Positions 275–310 (RKPFMASEQEQADNPRSRSAKLRIARRRPDTARSGP) are disordered. A compositionally biased stretch (basic and acidic residues) spans 301 to 310 (RRPDTARSGP).

It belongs to the methyltransferase superfamily. RsmH family.

The protein resides in the cytoplasm. It carries out the reaction cytidine(1402) in 16S rRNA + S-adenosyl-L-methionine = N(4)-methylcytidine(1402) in 16S rRNA + S-adenosyl-L-homocysteine + H(+). Specifically methylates the N4 position of cytidine in position 1402 (C1402) of 16S rRNA. The chain is Ribosomal RNA small subunit methyltransferase H from Synechococcus sp. (strain CC9311).